We begin with the raw amino-acid sequence, 453 residues long: Cytochrome P450 monooxygenase CYP2 (453 aa).

Residues 13-29 (MVITMLHGSSTYSLLAS) form a helical membrane-spanning segment. Asparagine 85 carries an N-linked (GlcNAc...) asparagine glycan. Cysteine 397 is a heme binding site.

It belongs to the cytochrome P450 family. Requires heme as cofactor.

The protein localises to the membrane. The protein operates within secondary metabolite biosynthesis. Functionally, cytochrome P450 monooxygenase; part of the gene cluster that mediates the biosynthesis of a tyrosine-derived cytochalasan acting as a fungal signal recognized by resistant rice plants and leads to avirulence in Pi33 resistant rice cultivars. The first step in the pathway is catalyzed by the hybrid PKS-NRPS ACE1, assisted by the enoyl reductase RAP1, that are responsible for fusion of the tyrosine precursor and the polyketide backbone. The polyketide synthase module (PKS) of ACE1 is responsible for the synthesis of the polyketide backbone and the downstream nonribosomal peptide synthetase (NRPS) amidates the carboxyl end of the polyketide with the tyrosine precursor. Because ACE1 lacks a designated enoylreductase (ER) domain, the required activity is provided the enoyl reductase RAP1. Reduction by the hydrolyase ORFZ, followed by dehydration and intra-molecular Diels-Alder cyclization by the Diels-Alderase ORF3 then yield the required isoindolone-fused macrocycle. A number of oxidative steps catalyzed by the tailoring enzymes identified within the cluster, including cytochrome P450 monooxygenases CYP1 to CYP4, the FAD-linked oxidoreductase OXR2 and the short-chain dehydrogenase/reductase OXR1, are further required to afford the final cytochalasans that confer avirulence and which have still to be identified. The monooxygenase CYP1 has been shown to be a site-selective C-18 hydroxylase whereas the function of CYP3 is the site-selective epoxidation of the C-6/C-7 olefin that is present in some intermediate compounds. Finally, SYN2 and RAP2 are not required for avirulence in Pi33 resistant rice cultivars. This Pyricularia oryzae (strain 70-15 / ATCC MYA-4617 / FGSC 8958) (Rice blast fungus) protein is Cytochrome P450 monooxygenase CYP2.